We begin with the raw amino-acid sequence, 88 residues long: Small ribosomal subunit protein uS15 (88 aa).

This sequence belongs to the universal ribosomal protein uS15 family. In terms of assembly, part of the 30S ribosomal subunit. Forms a bridge to the 50S subunit in the 70S ribosome, contacting the 23S rRNA.

In terms of biological role, one of the primary rRNA binding proteins, it binds directly to 16S rRNA where it helps nucleate assembly of the platform of the 30S subunit by binding and bridging several RNA helices of the 16S rRNA. Its function is as follows. Forms an intersubunit bridge (bridge B4) with the 23S rRNA of the 50S subunit in the ribosome. The protein is Small ribosomal subunit protein uS15 of Francisella tularensis subsp. holarctica (strain LVS).